The chain runs to 283 residues: 4-diphosphocytidyl-2-C-methyl-D-erythritol kinase (283 aa).

The active site involves Lys-10. 99–109 (PMGGGLGGGSS) is a binding site for ATP. The active site involves Asp-141.

Belongs to the GHMP kinase family. IspE subfamily. Homodimer.

It carries out the reaction 4-CDP-2-C-methyl-D-erythritol + ATP = 4-CDP-2-C-methyl-D-erythritol 2-phosphate + ADP + H(+). The protein operates within isoprenoid biosynthesis; isopentenyl diphosphate biosynthesis via DXP pathway; isopentenyl diphosphate from 1-deoxy-D-xylulose 5-phosphate: step 3/6. Its function is as follows. Catalyzes the phosphorylation of the position 2 hydroxy group of 4-diphosphocytidyl-2C-methyl-D-erythritol. This Escherichia coli O127:H6 (strain E2348/69 / EPEC) protein is 4-diphosphocytidyl-2-C-methyl-D-erythritol kinase.